The sequence spans 308 residues: MLNSAEGILLCVVTSEAVLGVLGDTYIALFNCMDYAKNKKLSKIGFILIGLAISRIGVVWIIILQGYIQVFFPHMLTSGNITEYITYIWVFLNHLSVWFVTNLNILYFLKIANFSNSVFLWLKRRVNAVFIFLSGCLLTSWLLCFPQMTKILQNSKMHQRNTSWVHQRKNYFLINQSVTNLGIFFFIIVSLITCFLLIVFLWRHVRQMHSDVSGFRDHSTKVHVKAMKFLISFMVFFILHFVGLSIEVLCFILPQNKLLFITGLTATCLYPCGHSIIVILGNKQLKQASLKALQQLKCCETKGNFRVK.

Over 1–7 (MLNSAEG) the chain is Extracellular. Residues 8–28 (ILLCVVTSEAVLGVLGDTYIA) traverse the membrane as a helical segment. Over 29–43 (LFNCMDYAKNKKLSK) the chain is Cytoplasmic. Residues 44 to 64 (IGFILIGLAISRIGVVWIIIL) traverse the membrane as a helical segment. The Extracellular segment spans residues 65–87 (QGYIQVFFPHMLTSGNITEYITY). N-linked (GlcNAc...) asparagine glycosylation is present at N80. Residues 88–108 (IWVFLNHLSVWFVTNLNILYF) form a helical membrane-spanning segment. Topologically, residues 109-125 (LKIANFSNSVFLWLKRR) are cytoplasmic. Residues 126–146 (VNAVFIFLSGCLLTSWLLCFP) form a helical membrane-spanning segment. Residues 147-180 (QMTKILQNSKMHQRNTSWVHQRKNYFLINQSVTN) are Extracellular-facing. N-linked (GlcNAc...) asparagine glycosylation is found at N161 and N175. Residues 181–201 (LGIFFFIIVSLITCFLLIVFL) traverse the membrane as a helical segment. Over 202–232 (WRHVRQMHSDVSGFRDHSTKVHVKAMKFLIS) the chain is Cytoplasmic. Residues 233 to 253 (FMVFFILHFVGLSIEVLCFIL) traverse the membrane as a helical segment. Residues 254 to 258 (PQNKL) are Extracellular-facing. Residues 259–279 (LFITGLTATCLYPCGHSIIVI) form a helical membrane-spanning segment. Over 280–308 (LGNKQLKQASLKALQQLKCCETKGNFRVK) the chain is Cytoplasmic.

It belongs to the G-protein coupled receptor T2R family.

It localises to the membrane. Its function is as follows. Putative taste receptor which may play a role in the perception of bitterness. The chain is Taste receptor type 2 member 107 from Mus musculus (Mouse).